Here is a 382-residue protein sequence, read N- to C-terminus: UDP-N-acetylglucosamine--N-acetylmuramyl-(pentapeptide) pyrophosphoryl-undecaprenol N-acetylglucosamine transferase (382 aa).

Residues 17–19 (TAG), Asn-137, Arg-179, Ser-213, and Gln-308 contribute to the UDP-N-acetyl-alpha-D-glucosamine site.

This sequence belongs to the glycosyltransferase 28 family. MurG subfamily.

It is found in the cell membrane. The enzyme catalyses di-trans,octa-cis-undecaprenyl diphospho-N-acetyl-alpha-D-muramoyl-L-alanyl-D-glutamyl-meso-2,6-diaminopimeloyl-D-alanyl-D-alanine + UDP-N-acetyl-alpha-D-glucosamine = di-trans,octa-cis-undecaprenyl diphospho-[N-acetyl-alpha-D-glucosaminyl-(1-&gt;4)]-N-acetyl-alpha-D-muramoyl-L-alanyl-D-glutamyl-meso-2,6-diaminopimeloyl-D-alanyl-D-alanine + UDP + H(+). It participates in cell wall biogenesis; peptidoglycan biosynthesis. Cell wall formation. Catalyzes the transfer of a GlcNAc subunit on undecaprenyl-pyrophosphoryl-MurNAc-pentapeptide (lipid intermediate I) to form undecaprenyl-pyrophosphoryl-MurNAc-(pentapeptide)GlcNAc (lipid intermediate II). In Rhodococcus jostii (strain RHA1), this protein is UDP-N-acetylglucosamine--N-acetylmuramyl-(pentapeptide) pyrophosphoryl-undecaprenol N-acetylglucosamine transferase.